The chain runs to 2272 residues: Voltage-dependent R-type calcium channel subunit alpha-1E (2272 aa).

The segment at 1–40 (MARFGEAVVVGRPGSGDGDSDQSRNRQGTPVPASGPAAAY) is disordered. Residues 1-90 (MARFGEAVVV…KYAKKLIDWP (90 aa)) lie on the Cytoplasmic side of the membrane. Phosphoserine is present on residues Ser-15 and Ser-20. The I repeat unit spans residues 77 to 355 (NIVRKYAKKL…LVLGVLSGEF (279 aa)). Residues 91 to 109 (PFEYMILATIIANCIVLAL) form a helical membrane-spanning segment. The Extracellular segment spans residues 110–128 (EQHLPEDDKTPMSRRLEKT). Residues 129–147 (EPYFIGIFCFEAGIKIVAL) traverse the membrane as a helical segment. Residues 148–159 (GFIFHKGSYLRN) lie on the Cytoplasmic side of the membrane. The helical transmembrane segment at 160–174 (GWNVMDFIVVLSGIL) threads the bilayer. At 175 to 186 (ATAGTHFNTHVD) the chain is on the extracellular side. A helical membrane pass occupies residues 187–206 (LRALRAVRVLRPLKLVSGIP). Over 207–224 (SLQIVLKSIMKAMVPLLQ) the chain is Cytoplasmic. Residues 225-245 (IGLLLFFAILMFAIIGLEFYS) form a helical membrane-spanning segment. At 246–327 (GKLHRACFMN…NTNDALGATW (82 aa)) the chain is on the extracellular side. The N-linked (GlcNAc...) asparagine glycan is linked to Asn-255. A helical membrane pass occupies residues 328 to 351 (NWLYFIPLIIIGSFFVLNLVLGVL). At 352–477 (SGEFAKERER…ISIRHMVKSQ (126 aa)) the chain is on the cytoplasmic side. The tract at residues 375–392 (QQIERELNGYRAWIDKAE) is binding to the beta subunit. Asp-427 contributes to the Ca(2+) binding site. At Ser-428 the chain carries Phosphoserine. Residues Ser-429, Glu-431, Cys-433, and Ser-438 each contribute to the Ca(2+) site. The residue at position 441 (Thr-441) is a Phosphothreonine. The II repeat unit spans residues 463–707 (ERLLRISIRH…VFLAIAVDNL (245 aa)). The chain crosses the membrane as a helical span at residues 478–497 (VFYWIVLSVVALNTACVAIV). At 498 to 510 (HHNQPQWLTHLLY) the chain is on the extracellular side. Residues 511–530 (YAEFLFLGLFLLEMSLKMYG) form a helical membrane-spanning segment. Residues 531–539 (MGPRLYFHS) are Cytoplasmic-facing. The chain crosses the membrane as a helical span at residues 540–558 (SFNCFDFGVTVGSIFEVVW). Topologically, residues 559–568 (AIFRPGTSFG) are extracellular. The helical transmembrane segment at 569-587 (ISVLRALRLLRIFKITKYW) threads the bilayer. Over 588–606 (ASLRNLVVSLMSSMKSIIS) the chain is Cytoplasmic. Residues 607–626 (LLFLLFLFIVVFALLGMQLF) form a helical membrane-spanning segment. Residues 627–679 (GGRFNFNDGTPSANFDTFPAAIMTVFQILTGEDWNEVMYNGIRSQGGVSSGMW) are Extracellular-facing. A helical membrane pass occupies residues 680 to 704 (SAIYFIVLTLFGNYTLLNVFLAIAV). Residues 705–1150 (DNLANAQELT…TTNPIRRACH (446 aa)) lie on the Cytoplasmic side of the membrane. Residues 730-777 (LQKAKEVSPMSAPNMPSIERDRRRRHHMSMWEPRSSHLRERRRRHHMS) are disordered. Residues Ser-737, Ser-746, Ser-794, Ser-816, and Ser-856 each carry the phosphoserine modification. Disordered stretches follow at residues 854–994 (GGSL…VPRG) and 1091–1127 (SNKT…RETG). Residues 914–927 (RHRQSQRRSRHRRV) show a composition bias toward basic residues. The segment covering 934 to 946 (SASASRSRSASQE) has biased composition (low complexity). Ser-948 is modified (phosphoserine). Composition is skewed to basic and acidic residues over residues 956-985 (EGEK…DLRR) and 1094-1105 (TDGEASPLKEAE). Ser-1099 carries the post-translational modification Phosphoserine. An III repeat occupies 1143–1429 (NPIRRACHYI…IFVALIIITF (287 aa)). The helical transmembrane segment at 1151–1167 (YIVNLRYFEMCILLVIA) threads the bilayer. The Extracellular segment spans residues 1168-1191 (ASSIALAAEDPVLTNSERNKVLRY). A helical membrane pass occupies residues 1192 to 1211 (FDYVFTGVFTFEMVIKMIDQ). Topologically, residues 1212 to 1219 (GLILQDGS) are cytoplasmic. A helical membrane pass occupies residues 1220–1242 (YFRDLWNILDFVVVVGALVAFAL). Topologically, residues 1243 to 1256 (ANALGTNKGRDIKT) are extracellular. The helical transmembrane segment at 1257 to 1274 (IKSLRVLRVLRPLKTIKR) threads the bilayer. Residues 1275-1293 (LPKLKAVFDCVVTSLKNVF) lie on the Cytoplasmic side of the membrane. The chain crosses the membrane as a helical span at residues 1294 to 1313 (NILIVYKLFMFIFAVIAVQL). The Extracellular segment spans residues 1314–1400 (FKGKFFYCTD…DRGPSRSNRM (87 aa)). A helical membrane pass occupies residues 1401–1424 (EMSIFYVVYFVVFPFFFVNIFVAL). Residues 1425-1481 (IIITFQEQGDKMMEECSLEKNERACIDFAISAKPLTRYMPQNRHTFQYRVWHFVVSP) are Cytoplasmic-facing. An IV repeat occupies 1466 to 1729 (NRHTFQYRVW…LFVAVIMDNF (264 aa)). A helical transmembrane segment spans residues 1482–1500 (SFEYTIMAMIALNTVVLMM). Over 1501–1515 (KYYTAPCTYELALKY) the chain is Extracellular. Residues 1516–1535 (LNIAFTMVFSLECVLKVIAF) form a helical membrane-spanning segment. The Cytoplasmic portion of the chain corresponds to 1536–1543 (GFLNYFRD). The chain crosses the membrane as a helical span at residues 1544–1562 (TWNIFDFITVIGSITEIIL). Topologically, residues 1563-1573 (TDSKLVNTSGF) are extracellular. Asn-1569 carries an N-linked (GlcNAc...) asparagine glycan. Residues 1574–1592 (NMSFLKLFRAARLIKLLRQ) form a helical membrane-spanning segment. At 1593 to 1611 (GYTIRILLWTFVQSFKALP) the chain is on the cytoplasmic side. Residues 1612 to 1631 (YVCLLIAMLFFIYAIIGMQV) traverse the membrane as a helical segment. Topologically, residues 1632–1700 (FGNIKLDEES…QNESERCGTD (69 aa)) are extracellular. Residue Asn-1692 is glycosylated (N-linked (GlcNAc...) asparagine). Residues 1701–1726 (LAYVYFVSFIFFCSFLMLNLFVAVIM) traverse the membrane as a helical segment. At 1727-2272 (DNFEYLTRDS…LSDTEEDDKC (546 aa)) the chain is on the cytoplasmic side. The EF-hand domain maps to 1742–1777 (HHLDEFVRVWAEYDRAACGRIHYTEMYEMLTLMSPP). Ca(2+)-binding residues include Asp-1755, Arg-1761, and Glu-1766. Residues 2021–2186 (SAHRLNSDSG…QQGQHPSPQH (166 aa)) form a disordered region. Basic and acidic residues predominate over residues 2025–2045 (LNSDSGHKSDTHRSGGRERGR). Ser-2054 and Ser-2073 each carry phosphoserine. Over residues 2061–2078 (NSEERGTQADWESPERRQ) the composition is skewed to basic and acidic residues. Over residues 2097–2112 (SLSESSIPSISDTSTP) the composition is skewed to low complexity. The span at 2155-2174 (LASQALESNSACLTESSNSL) shows a compositional bias: polar residues. The segment covering 2175–2186 (HPQQGQHPSPQH) has biased composition (low complexity).

Belongs to the calcium channel alpha-1 subunit (TC 1.A.1.11) family. CACNA1E subfamily. In terms of assembly, interacts with EFHC1. Voltage-dependent calcium channels are multisubunit complexes, consisting of alpha-1, alpha-2, beta and delta subunits in a 1:1:1:1 ratio. The channel activity is directed by the pore-forming and voltage-sensitive alpha-1 subunit. In many cases, this subunit is sufficient to generate voltage-sensitive calcium channel activity. The auxiliary subunits beta and alpha-2/delta linked by a disulfide bridge regulate the channel activity. Expressed in neuronal tissues, retina, spleen, and pancreatic islet cells.

The protein localises to the membrane. The catalysed reaction is Ca(2+)(in) = Ca(2+)(out). Voltage-sensitive calcium channels (VSCC) mediate the entry of calcium ions into excitable cells and are also involved in a variety of calcium-dependent processes, including muscle contraction, hormone or neurotransmitter release, gene expression, cell motility, cell division and cell death. The isoform alpha-1E gives rise to R-type calcium currents. R-type calcium channels belong to the 'high-voltage activated' (HVA) group and are blocked by nickel. They are however insensitive to dihydropyridines (DHP). Calcium channels containing alpha-1E subunit could be involved in the modulation of firing patterns of neurons which is important for information processing. In Mus musculus (Mouse), this protein is Voltage-dependent R-type calcium channel subunit alpha-1E (Cacna1e).